The chain runs to 132 residues: Small ribosomal subunit protein uS8 (132 aa).

It belongs to the universal ribosomal protein uS8 family. Part of the 30S ribosomal subunit. Contacts proteins S5 and S12.

In terms of biological role, one of the primary rRNA binding proteins, it binds directly to 16S rRNA central domain where it helps coordinate assembly of the platform of the 30S subunit. This chain is Small ribosomal subunit protein uS8, found in Borrelia turicatae (strain 91E135).